A 420-amino-acid polypeptide reads, in one-letter code: Gamma-glutamyl phosphate reductase (420 aa).

Belongs to the gamma-glutamyl phosphate reductase family.

The protein localises to the cytoplasm. It catalyses the reaction L-glutamate 5-semialdehyde + phosphate + NADP(+) = L-glutamyl 5-phosphate + NADPH + H(+). Its pathway is amino-acid biosynthesis; L-proline biosynthesis; L-glutamate 5-semialdehyde from L-glutamate: step 2/2. In terms of biological role, catalyzes the NADPH-dependent reduction of L-glutamate 5-phosphate into L-glutamate 5-semialdehyde and phosphate. The product spontaneously undergoes cyclization to form 1-pyrroline-5-carboxylate. This Streptococcus pneumoniae serotype 19F (strain G54) protein is Gamma-glutamyl phosphate reductase.